A 424-amino-acid chain; its full sequence is Phosphomethylpyrimidine synthase (424 aa).

Residues N66, M95, Y124, H163, 185-187 (SRG), 226-229 (DGMR), and E265 contribute to the substrate site. H269 contacts Zn(2+). F292 contacts substrate. Residue H333 coordinates Zn(2+). Positions 408, 411, and 415 each coordinate [4Fe-4S] cluster.

The protein belongs to the ThiC family. [4Fe-4S] cluster serves as cofactor.

It catalyses the reaction 5-amino-1-(5-phospho-beta-D-ribosyl)imidazole + S-adenosyl-L-methionine = 4-amino-2-methyl-5-(phosphooxymethyl)pyrimidine + CO + 5'-deoxyadenosine + formate + L-methionine + 3 H(+). It functions in the pathway cofactor biosynthesis; thiamine diphosphate biosynthesis. Its function is as follows. Catalyzes the synthesis of the hydroxymethylpyrimidine phosphate (HMP-P) moiety of thiamine from aminoimidazole ribotide (AIR) in a radical S-adenosyl-L-methionine (SAM)-dependent reaction. In Thermotoga sp. (strain RQ2), this protein is Phosphomethylpyrimidine synthase.